We begin with the raw amino-acid sequence, 500 residues long: Guanosine-5'-triphosphate,3'-diphosphate pyrophosphatase (500 aa).

It belongs to the GppA/Ppx family. GppA subfamily.

It carries out the reaction guanosine 3'-diphosphate 5'-triphosphate + H2O = guanosine 3',5'-bis(diphosphate) + phosphate + H(+). The protein operates within purine metabolism; ppGpp biosynthesis; ppGpp from GTP: step 2/2. In terms of biological role, catalyzes the conversion of pppGpp to ppGpp. Guanosine pentaphosphate (pppGpp) is a cytoplasmic signaling molecule which together with ppGpp controls the 'stringent response', an adaptive process that allows bacteria to respond to amino acid starvation, resulting in the coordinated regulation of numerous cellular activities. The sequence is that of Guanosine-5'-triphosphate,3'-diphosphate pyrophosphatase from Photorhabdus laumondii subsp. laumondii (strain DSM 15139 / CIP 105565 / TT01) (Photorhabdus luminescens subsp. laumondii).